The following is a 226-amino-acid chain: Xanthocillin biosynthesis cluster protein F (226 aa).

Its pathway is secondary metabolite biosynthesis. In terms of biological role, part of the gene cluster that mediates the biosynthesis of the isocyanide xanthocillin and its derivatives. The first step of the pathway consists in the conversion of tyrosine into a vinyl-isonitrile intermediate by the isocyanide synthase xanB. Subsequent oxidative dimerization of this intermediate to form xanthocillin may involve the cytochrome P450 monooxygenase xanG, whose expression is coregulated with that of XanB. Xanthocillin can be further modified by the isonitrile hydratase-like protein xanA which introduces N-formyl groups and the methyltransferase xanE which introduces methyl groups, leading to the production of several derivatives including fumiformamide. Finally, fumiformamide can be subject to both oxidative and reductive cyclization to yield melanocins E and F, respectively. This Aspergillus fumigatus (strain ATCC MYA-4609 / CBS 101355 / FGSC A1100 / Af293) (Neosartorya fumigata) protein is Xanthocillin biosynthesis cluster protein F.